A 149-amino-acid polypeptide reads, in one-letter code: D-aminoacyl-tRNA deacylase (149 aa).

The Gly-cisPro motif, important for rejection of L-amino acids motif lies at 137 to 138 (GP).

The protein belongs to the DTD family. As to quaternary structure, homodimer.

It is found in the cytoplasm. The catalysed reaction is glycyl-tRNA(Ala) + H2O = tRNA(Ala) + glycine + H(+). It catalyses the reaction a D-aminoacyl-tRNA + H2O = a tRNA + a D-alpha-amino acid + H(+). An aminoacyl-tRNA editing enzyme that deacylates mischarged D-aminoacyl-tRNAs. Also deacylates mischarged glycyl-tRNA(Ala), protecting cells against glycine mischarging by AlaRS. Acts via tRNA-based rather than protein-based catalysis; rejects L-amino acids rather than detecting D-amino acids in the active site. By recycling D-aminoacyl-tRNA to D-amino acids and free tRNA molecules, this enzyme counteracts the toxicity associated with the formation of D-aminoacyl-tRNA entities in vivo and helps enforce protein L-homochirality. In Thermoanaerobacter pseudethanolicus (strain ATCC 33223 / 39E) (Clostridium thermohydrosulfuricum), this protein is D-aminoacyl-tRNA deacylase.